Consider the following 165-residue polypeptide: uncharacterized protein (165 aa).

The segment at Glu-28–Thr-97 is disordered. Over residues Gly-34–Ile-47 the composition is skewed to pro residues. Composition is skewed to polar residues over residues Lys-54–Asn-66 and Ala-73–Glu-94.

This is an uncharacterized protein from Rickettsia prowazekii (strain Madrid E).